A 213-amino-acid polypeptide reads, in one-letter code: Peptide methionine sulfoxide reductase MsrA (213 aa).

Residue Cys-52 is part of the active site.

The protein belongs to the MsrA Met sulfoxide reductase family.

It carries out the reaction L-methionyl-[protein] + [thioredoxin]-disulfide + H2O = L-methionyl-(S)-S-oxide-[protein] + [thioredoxin]-dithiol. The enzyme catalyses [thioredoxin]-disulfide + L-methionine + H2O = L-methionine (S)-S-oxide + [thioredoxin]-dithiol. Has an important function as a repair enzyme for proteins that have been inactivated by oxidation. Catalyzes the reversible oxidation-reduction of methionine sulfoxide in proteins to methionine. The sequence is that of Peptide methionine sulfoxide reductase MsrA from Enterobacter sp. (strain 638).